The chain runs to 435 residues: MKQLHKQMSSKRDEETIPMSQSSPYSPKTLKHPRSLPRSLHYLFREQRLLFILVGILIGSTFFILQPSLSRLGAAESTSLITRSVSYAVTDSPPSRSTFNSGGGGGRTGRVPVGIGRKRLRIVVTGGAGFVGSHLVDKLIGRGDEVIVIDNFFTGRKENLVHLFSNPRFELIRHDVVEPILLEVDQIYHLACPASPVHYKYNPVKTIKTNVMGTLNMLGLAKRVGARFLLTSTSEVYGDPLEHPQKETYWGNVNPIGERSCYDEGKRTAETLAMDYHRGAGVEVRIARIFNTYGPRMCLDDGRVVSNFVAQTIRKHPMTVYGDGKQTRSFQYVSDLVEGLVALMENDHVGPFNLGNPGEFTMLELAEVVKEVIDPSATIEFKPNTADDPHKRKPDISKAKEQLNWEPKISLREGLPRMVSDFRNRILNEDEGKGL.

Positions 1 to 33 (MKQLHKQMSSKRDEETIPMSQSSPYSPKTLKHP) are disordered. Over 1–48 (MKQLHKQMSSKRDEETIPMSQSSPYSPKTLKHPRSLPRSLHYLFREQR) the chain is Cytoplasmic. The chain crosses the membrane as a helical; Signal-anchor for type II membrane protein span at residues 49-69 (LLFILVGILIGSTFFILQPSL). At 70–435 (SRLGAAESTS…ILNEDEGKGL (366 aa)) the chain is on the lumenal side. A compositionally biased stretch (polar residues) spans 91-100 (DSPPSRSTFN). Residues 91–110 (DSPPSRSTFNSGGGGGRTGR) form a disordered region. NAD(+) is bound by residues glycine 129, phenylalanine 130, valine 131, aspartate 150, asparagine 151, phenylalanine 153, threonine 154, glycine 155, aspartate 175, and valine 176. Isoleucine 180 is a UDP-alpha-D-glucuronate binding site. Position 190 (leucine 190) interacts with NAD(+). A UDP-alpha-D-glucuronate-binding site is contributed by lysine 208. Threonine 209 lines the NAD(+) pocket. 4 residues coordinate UDP-alpha-D-glucuronate: asparagine 216, glycine 219, lysine 222, and arginine 223. Positions 262 and 266 each coordinate NAD(+). Tyrosine 262 serves as the catalytic Proton acceptor. Tyrosine 276 contacts UDP-alpha-D-glucuronate. 2 residues coordinate NAD(+): threonine 292 and arginine 303. The interval 380–401 (EFKPNTADDPHKRKPDISKAKE) is disordered. The span at 385 to 401 (TADDPHKRKPDISKAKE) shows a compositional bias: basic and acidic residues.

The protein belongs to the NAD(P)-dependent epimerase/dehydratase family. UDP-glucuronic acid decarboxylase subfamily. NAD(+) is required as a cofactor. As to expression, ubiquitous.

Its subcellular location is the golgi apparatus. It localises to the golgi stack membrane. It carries out the reaction UDP-alpha-D-glucuronate + H(+) = UDP-alpha-D-xylose + CO2. It participates in nucleotide-sugar biosynthesis; UDP-alpha-D-xylose biosynthesis; UDP-alpha-D-xylose from UDP-alpha-D-glucuronate: step 1/1. Catalyzes the NAD-dependent decarboxylation of UDP-glucuronic acid to UDP-xylose. Necessary for the biosynthesis of the core tetrasaccharide in glycosaminoglycan biosynthesis. The sequence is that of UDP-glucuronic acid decarboxylase 1 from Arabidopsis thaliana (Mouse-ear cress).